A 293-amino-acid polypeptide reads, in one-letter code: Ribosomal RNA small subunit methyltransferase A (293 aa).

S-adenosyl-L-methionine is bound by residues Asn-33, Val-35, Gly-60, Glu-81, Asp-111, and Asn-130.

The protein belongs to the class I-like SAM-binding methyltransferase superfamily. rRNA adenine N(6)-methyltransferase family. RsmA subfamily.

It is found in the cytoplasm. It catalyses the reaction adenosine(1518)/adenosine(1519) in 16S rRNA + 4 S-adenosyl-L-methionine = N(6)-dimethyladenosine(1518)/N(6)-dimethyladenosine(1519) in 16S rRNA + 4 S-adenosyl-L-homocysteine + 4 H(+). Functionally, specifically dimethylates two adjacent adenosines (A1518 and A1519) in the loop of a conserved hairpin near the 3'-end of 16S rRNA in the 30S particle. May play a critical role in biogenesis of 30S subunits. The sequence is that of Ribosomal RNA small subunit methyltransferase A from Corynebacterium glutamicum (strain ATCC 13032 / DSM 20300 / JCM 1318 / BCRC 11384 / CCUG 27702 / LMG 3730 / NBRC 12168 / NCIMB 10025 / NRRL B-2784 / 534).